The following is a 306-amino-acid chain: S-methyl-5'-thioadenosine phosphorylase (306 aa).

Residues T21, 63 to 64 (RH), and 96 to 97 (SA) contribute to the phosphate site. Residue M198 coordinates substrate. Position 199 (S199) interacts with phosphate. 222–224 (DYD) serves as a coordination point for substrate.

This sequence belongs to the PNP/MTAP phosphorylase family. MTAP subfamily. Homotrimer.

It localises to the cytoplasm. The protein localises to the nucleus. It carries out the reaction S-methyl-5'-thioadenosine + phosphate = 5-(methylsulfanyl)-alpha-D-ribose 1-phosphate + adenine. The protein operates within amino-acid biosynthesis; L-methionine biosynthesis via salvage pathway; S-methyl-5-thio-alpha-D-ribose 1-phosphate from S-methyl-5'-thioadenosine (phosphorylase route): step 1/1. Its function is as follows. Catalyzes the reversible phosphorylation of S-methyl-5'-thioadenosine (MTA) to adenine and 5-methylthioribose-1-phosphate. Involved in the breakdown of MTA, a major by-product of polyamine biosynthesis. Responsible for the first step in the methionine salvage pathway after MTA has been generated from S-adenosylmethionine. Has broad substrate specificity with 6-aminopurine nucleosides as preferred substrates. The chain is S-methyl-5'-thioadenosine phosphorylase from Sclerotinia sclerotiorum (strain ATCC 18683 / 1980 / Ss-1) (White mold).